We begin with the raw amino-acid sequence, 581 residues long: uncharacterized protein (581 aa).

Positions 1–28 (MDSKAVSPLIGFVLMLAIIMGLIGIMQA) are cleaved as a signal peptide.

This is an uncharacterized protein from Archaeoglobus fulgidus (strain ATCC 49558 / DSM 4304 / JCM 9628 / NBRC 100126 / VC-16).